The chain runs to 201 residues: Small ribosomal subunit protein uS4c (201 aa).

Positions 89–152 (MRLDNILFRL…NSRTLVQNLL (64 aa)) constitute an S4 RNA-binding domain.

Belongs to the universal ribosomal protein uS4 family. As to quaternary structure, part of the 30S ribosomal subunit. Contacts protein S5. The interaction surface between S4 and S5 is involved in control of translational fidelity.

The protein localises to the plastid. The protein resides in the chloroplast. Functionally, one of the primary rRNA binding proteins, it binds directly to 16S rRNA where it nucleates assembly of the body of the 30S subunit. In terms of biological role, with S5 and S12 plays an important role in translational accuracy. The chain is Small ribosomal subunit protein uS4c (rps4) from Arabidopsis thaliana (Mouse-ear cress).